Reading from the N-terminus, the 445-residue chain is Putative diacyglycerol O-acyltransferase Rv2285 (445 aa).

His-135 serves as the catalytic Proton acceptor.

It belongs to the long-chain O-acyltransferase family.

The enzyme catalyses an acyl-CoA + a 1,2-diacyl-sn-glycerol = a triacyl-sn-glycerol + CoA. It carries out the reaction di-(9Z)-octadecenoylglycerol + (9Z)-octadecenoyl-CoA = 1,2,3-tri-(9Z-octadecenoyl)-glycerol + CoA. It participates in glycerolipid metabolism; triacylglycerol biosynthesis. Functionally, catalyzes the terminal and only committed step in triacylglycerol synthesis by using diacylglycerol and fatty acyl CoA as substrates. Required for storage lipid synthesis. Its function is as follows. Upon expression in E.coli functions weakly as a triacylglycerol synthase, making triacylglycerol (TG) from diolein and long-chain fatty acyl-CoA. Has very weak wax synthase activity, incorporating palmityl alcohol into wax esters in the presence of palmitoyl-CoA. The chain is Putative diacyglycerol O-acyltransferase Rv2285 from Mycobacterium tuberculosis (strain ATCC 25618 / H37Rv).